Here is a 127-residue protein sequence, read N- to C-terminus: ALK and LTK ligand 1 (127 aa).

An N-terminal signal peptide occupies residues 1–27 (MWLTKPSTPVSALLLLALALSPPGTQG). Disulfide bonds link Cys88/Cys124 and Cys102/Cys111.

The protein belongs to the ALKAL family.

The protein resides in the secreted. Its subcellular location is the cell membrane. Its function is as follows. Cytokine that acts as a physiological ligand for receptor tyrosine kinase LTK, leading to its activation. Monomeric ALKAL1 binds to LTK, leading to LTK homodimerization and activation. In contrast to ALKAL2, does not act as a potent physiological ligand for ALK. The sequence is that of ALK and LTK ligand 1 from Mus musculus (Mouse).